Consider the following 331-residue polypeptide: Glutamyl-Q tRNA(Asp) synthetase (331 aa).

Positions 1-30 (MVQQAVIQRSANQQLSNQRSANQRATNQPT) are enriched in polar residues. Residues 1 to 36 (MVQQAVIQRSANQQLSNQRSANQRATNQPTEYVGRF) form a disordered region. L-glutamate-binding positions include 35 to 39 (RFAPS) and Glu71. The 'HIGH' region signature appears at 38–48 (PSPSGDLHFGS). Zn(2+) contacts are provided by Cys127, Cys129, Tyr141, and Cys145. Tyr198 and Arg216 together coordinate L-glutamate. The 'KMSKS' region signature appears at 254 to 258 (KLSKQ). Lys257 serves as a coordination point for ATP.

The protein belongs to the class-I aminoacyl-tRNA synthetase family. GluQ subfamily. It depends on Zn(2+) as a cofactor.

In terms of biological role, catalyzes the tRNA-independent activation of glutamate in presence of ATP and the subsequent transfer of glutamate onto a tRNA(Asp). Glutamate is transferred on the 2-amino-5-(4,5-dihydroxy-2-cyclopenten-1-yl) moiety of the queuosine in the wobble position of the QUC anticodon. The sequence is that of Glutamyl-Q tRNA(Asp) synthetase from Yersinia pseudotuberculosis serotype I (strain IP32953).